The sequence spans 757 residues: MSSKRLSQNEQEKSPGTGPPTHKRRRIGLACNACRMRKSRCDGHRPSCSSCLSLGVNCLYEPGDSTTNVIVRKDYVSDLEQRVASVEHNLQRLNDVLKGHLSPCTGGTDSNNHHNNHDSPCHQPTIAQSITSSRPNTRDKSAANETCATGLEEPDDEDANTNGMAMTFVEEKTSVYYGEASNINFTQLLLRALATVHGATPVAPSASNQASGPGDGVTTDVPQNQHAVSASDLATSESSPTALPSVQEMDSLLDIYFDTAGVVFPFICEDTMRRTYNECRHNGFTRARRTWLGTLNMIFALASCLSSSAKVRFERCNVFYKRAMALCGELSKRVVSLEIVHYLILVVLHCQGTQRSIQAWNNHGLAIRSAMALGLHCQSSGVSLDSAQQEYRRRTWVIIYCLDKVLSTAFGRPASIADEQMHSFNGRESVMGLSPMSLSNPQVPVDLPGDFLSVSFRLYQVMSKSLAEQYGTNLDHVDSGHDDMAPLKASGELRKQLRLWAGSLPGHLHVCQPEDEFLAHNTRGNRLRVILTLRYHNLGILIHKPLLSTTIRHLFQAGNRMEAPPSYMIQLAMAEAHECLRSAQLTIDIVYAVISADPTPENNLGAWYFTLYYVFTASLVVSGRLLWAQHGQSIVDEVAVDHCKSLLSKAEEIFKKLDRKNSLVLSCLEYIARLARICSMKDVPPNHQNGSLDITSDTTNTASGVTDTMPLDEDGMDAFQLFAAEMFDPNIFKGFNLSPVEGVSFTDGIWEGFPCGG.

The interval 1 to 24 (MSSKRLSQNEQEKSPGTGPPTHKR) is disordered. The segment at residues 31-58 (CNACRMRKSRCDGHRPSCSSCLSLGVNC) is a DNA-binding region (zn(2)-C6 fungal-type). Disordered stretches follow at residues 106–161 (GGTD…DANT) and 202–222 (VAPSASNQASGPGDGVTTDVP). Basic and acidic residues predominate over residues 111 to 120 (NNHHNNHDSP). The span at 125–135 (TIAQSITSSRP) shows a compositional bias: polar residues.

The protein resides in the nucleus. In terms of biological role, transcription factor; part of the Fusarium detoxification of benzoxazolinone cluster involved in the degradation of benzoxazolinones produced by the host plant. Maize, wheat, and rye produce the 2 benzoxazinone phytoanticipins 2,4-dihy-droxy-7-methoxy-1,4-benzoxazin-3-one (DIMBOA) and 2,4-dihydroxy-1,4-benzoxazin-3-one (DIBOA) that, due to their inherent instability once released, spontaneously degrade to the more stable corresponding benzoxazolinones, 6-methoxy-2-benzoxazolinone (MBOA) and 2-benzoxazolinone (BOA), respectively. FDB3 controls the transcription of the FDB gene cluster in response to 6-methoxy-2-benzoxazolinone (MBOA). The sequence is that of Transcription factor FBD3 from Fusarium pseudograminearum (strain CS3096) (Wheat and barley crown-rot fungus).